We begin with the raw amino-acid sequence, 290 residues long: ATP synthase gamma chain (290 aa).

This sequence belongs to the ATPase gamma chain family. In terms of assembly, F-type ATPases have 2 components, CF(1) - the catalytic core - and CF(0) - the membrane proton channel. CF(1) has five subunits: alpha(3), beta(3), gamma(1), delta(1), epsilon(1). CF(0) has three main subunits: a, b and c.

It localises to the cell inner membrane. Functionally, produces ATP from ADP in the presence of a proton gradient across the membrane. The gamma chain is believed to be important in regulating ATPase activity and the flow of protons through the CF(0) complex. This Erythrobacter litoralis (strain HTCC2594) protein is ATP synthase gamma chain.